The following is a 192-amino-acid chain: Ion-translocating oxidoreductase complex subunit B (192 aa).

Positions 1 to 26 (MSAVWIAVIAISLLGLIFGLILGYAS) are hydrophobic. One can recognise a 4Fe-4S domain in the interval 32–91 (QDDPVVEKIDELLPQSQCGQCGYPGCRPYAEAVGAQGEKINRCAPGGEAVMLKIAALLNV). C49, C52, C57, C74, C117, C120, C123, C127, C147, C150, C153, and C157 together coordinate [4Fe-4S] cluster. 2 4Fe-4S ferredoxin-type domains span residues 108–137 (MLAVIDEPNCIGCTKCIQACPVDAIVGATR) and 138–167 (AMHTVMNDLCTGCNLCVAPCPTQCISLVPV).

It belongs to the 4Fe4S bacterial-type ferredoxin family. RnfB subfamily. In terms of assembly, the complex is composed of six subunits: RnfA, RnfB, RnfC, RnfD, RnfE and RnfG. [4Fe-4S] cluster is required as a cofactor.

It localises to the cell inner membrane. In terms of biological role, part of a membrane-bound complex that couples electron transfer with translocation of ions across the membrane. The sequence is that of Ion-translocating oxidoreductase complex subunit B from Klebsiella pneumoniae (strain 342).